The following is a 511-amino-acid chain: MEKFEGYSEKQKSRQQYFVYPLLFQEYIYAFAHDYGLNGSEPVEIVSWNNKKFSSLLVKRLIIRMYQQNFLDNSVNHPNQDRLLDYKIFFYSEFYSQILSEGFAIVVEIPFSLRELSCPKEKEIPKFQNLRSIHSIFPFLEDKFLHLDYLSHIEIPYPIHLEILVQLLQYRIQDVPSLHLLRFFLNYYSNWNSFITSMKSILFFQKENKRLVKFLYNSYVSEYEFFLLFLRKQSSCLPLAYSGTFLERIHFSRKMEHFGIMYPGFSRKTLWFFMDPLIHYVRYQGKAILASKGSFFLKKKWKCYLINFWQYYFFFWTQPRRIHINQLANSCFDFMGYLSSVPKSPLLVRNQMLENSFLIDTRMKKFDTIVPATLLIGYLSKAQFCTGSGHPISKPIWTDLSDWDILDRFGRICRNLFHYYSGSSKKRTLYRLKYILRLSCARTLARKHKSTVRTFMQRLGSAFLEEFFTEEEQVFSLMFTKTTLFSFSGSHTERIWYLDIIGINDLVNPLN.

This sequence belongs to the intron maturase 2 family. MatK subfamily.

The protein resides in the plastid. Its subcellular location is the chloroplast. Its function is as follows. Usually encoded in the trnK tRNA gene intron. Probably assists in splicing its own and other chloroplast group II introns. The protein is Maturase K of Hordeum vulgare (Barley).